A 543-amino-acid polypeptide reads, in one-letter code: CTP synthase (543 aa).

Positions 1–265 are amidoligase domain; the sequence is MARYIFITGG…DDEVLAAFAI (265 aa). Ser13 lines the CTP pocket. Residue Ser13 coordinates UTP. Residue 14–19 coordinates ATP; sequence SLGKGL. Position 54 (Tyr54) interacts with L-glutamine. An ATP-binding site is contributed by Asp71. Asp71 and Glu139 together coordinate Mg(2+). CTP is bound by residues 146 to 148, 186 to 191, and Lys222; these read DIE and KTKPTQ. Residues 186–191 and Lys222 contribute to the UTP site; that span reads KTKPTQ. 238–240 is an ATP binding site; that stretch reads RDA. The Glutamine amidotransferase type-1 domain maps to 291–542; it reads TIAIVGKYTG…IEAALVRSRL (252 aa). Residue Gly353 coordinates L-glutamine. Cys380 functions as the Nucleophile; for glutamine hydrolysis in the catalytic mechanism. L-glutamine-binding positions include 381–384, Glu404, and Arg470; that span reads FGMQ. Active-site residues include His515 and Glu517.

It belongs to the CTP synthase family. Homotetramer.

It carries out the reaction UTP + L-glutamine + ATP + H2O = CTP + L-glutamate + ADP + phosphate + 2 H(+). It catalyses the reaction L-glutamine + H2O = L-glutamate + NH4(+). The catalysed reaction is UTP + NH4(+) + ATP = CTP + ADP + phosphate + 2 H(+). The protein operates within pyrimidine metabolism; CTP biosynthesis via de novo pathway; CTP from UDP: step 2/2. Its activity is regulated as follows. Allosterically activated by GTP, when glutamine is the substrate; GTP has no effect on the reaction when ammonia is the substrate. The allosteric effector GTP functions by stabilizing the protein conformation that binds the tetrahedral intermediate(s) formed during glutamine hydrolysis. Inhibited by the product CTP, via allosteric rather than competitive inhibition. Functionally, catalyzes the ATP-dependent amination of UTP to CTP with either L-glutamine or ammonia as the source of nitrogen. Regulates intracellular CTP levels through interactions with the four ribonucleotide triphosphates. The protein is CTP synthase of Rhodopseudomonas palustris (strain HaA2).